The sequence spans 136 residues: Large ribosomal subunit protein uL16 (136 aa).

The protein belongs to the universal ribosomal protein uL16 family. Part of the 50S ribosomal subunit.

Binds 23S rRNA and is also seen to make contacts with the A and possibly P site tRNAs. The sequence is that of Large ribosomal subunit protein uL16 from Shewanella halifaxensis (strain HAW-EB4).